Consider the following 400-residue polypeptide: MCSENFKKFLVSEASGGIFLIAAAVIAMVFQNGFLSEFYNSFLHIDMGFKFGEFLLQKPLILWVNDGLMAIFFFVLGLELKREILEGELRNPAQVVLPAVGAIGGIVVPAFIFYLFNHTDSFAARGWAIPTATDTAFALGIIMILGARVPASLKIFLVTLAIIDDVCAILIMAIFYSGDLSLISFGVAAIVILGLLALNLLNVNKKSFYLILGIILWISVLKSGVHATLAGVISAFFIPLKCKNSDKSLLKEIEHDLHGYITYFVLPVFAFVNAGISLKGIGLEQLTHPVSLGVILGLFLGKQIGVFGFCFVAIKLGFAKLPKYSCWISFYGLCILTGIGFTMSLFINSLSYNDTDKFAYADKLSVLIASVISGVLGYIVLYIASVRKEKIEVKAQNESF.

A run of 11 helical transmembrane segments spans residues phenylalanine 9 to valine 29, leucine 60 to leucine 80, valine 96 to phenylalanine 116, tryptophan 127 to alanine 147, isoleucine 155 to phenylalanine 175, leucine 180 to leucine 200, leucine 210 to alanine 230, tyrosine 263 to leucine 283, valine 294 to isoleucine 314, tryptophan 327 to isoleucine 347, and valine 366 to valine 386.

Belongs to the NhaA Na(+)/H(+) (TC 2.A.33) antiporter family.

The protein localises to the cell inner membrane. It carries out the reaction Na(+)(in) + 2 H(+)(out) = Na(+)(out) + 2 H(+)(in). In terms of biological role, na(+)/H(+) antiporter that extrudes sodium in exchange for external protons. The polypeptide is Na(+)/H(+) antiporter NhaA (Campylobacter curvus (strain 525.92)).